Here is a 147-residue protein sequence, read N- to C-terminus: Heavy metal-dependent transcription regulator 1 (147 aa).

In terms of domain architecture, HTH merR-type spans 1-70 (MNIGQASKVV…VEQIKDLLAL (70 aa)). Residues 3–22 (IGQASKVVSGVSSKMIRYYE) constitute a DNA-binding region (H-T-H motif).

It localises to the cytoplasm. Its function is as follows. Transcriptional regulator involved in acid tolerance. Binds copper. This Rhizobium meliloti (strain 1021) (Ensifer meliloti) protein is Heavy metal-dependent transcription regulator 1 (hmrR1).